The chain runs to 141 residues: uncharacterized protein (141 aa).

This is an uncharacterized protein from Schizosaccharomyces pombe (strain 972 / ATCC 24843) (Fission yeast).